Consider the following 204-residue polypeptide: ATP-dependent Clp protease proteolytic subunit (204 aa).

Ser-101 acts as the Nucleophile in catalysis. His-126 is an active-site residue.

The protein belongs to the peptidase S14 family. In terms of assembly, component of the chloroplastic Clp protease core complex.

The protein resides in the plastid. The protein localises to the chloroplast stroma. It catalyses the reaction Hydrolysis of proteins to small peptides in the presence of ATP and magnesium. alpha-casein is the usual test substrate. In the absence of ATP, only oligopeptides shorter than five residues are hydrolyzed (such as succinyl-Leu-Tyr-|-NHMec, and Leu-Tyr-Leu-|-Tyr-Trp, in which cleavage of the -Tyr-|-Leu- and -Tyr-|-Trp bonds also occurs).. Functionally, cleaves peptides in various proteins in a process that requires ATP hydrolysis. Has a chymotrypsin-like activity. Plays a major role in the degradation of misfolded proteins. This Phalaenopsis aphrodite subsp. formosana (Moth orchid) protein is ATP-dependent Clp protease proteolytic subunit.